The sequence spans 109 residues: Putative transporter-like protein YIL171W (109 aa).

Residues 1 to 22 are compositionally biased toward polar residues; the sequence is MSGVNNTSANDLSTTESNSNSA. The segment at 1–40 is disordered; that stretch reads MSGVNNTSANDLSTTESNSNSAVGAPSVKTEHGDSKDSLN. Residues 1 to 56 lie on the Cytoplasmic side of the membrane; that stretch reads MSGVNNTSANDLSTTESNSNSAVGAPSVKTEHGDSKDSLNLDATEAPIDLPQKPLS. Positions 29 to 39 are enriched in basic and acidic residues; it reads KTEHGDSKDSL. The helical transmembrane segment at 57 to 77 threads the bilayer; it reads AYTTVAILCLMIAFGGFIFGW. At 78-109 the chain is on the extracellular side; the sequence is DTGTISGFVNLSDFIRRFGQKKTTRGLTTYRK. N-linked (GlcNAc...) asparagine glycosylation occurs at Asn-87.

It belongs to the major facilitator superfamily. Sugar transporter (TC 2.A.1.1) family.

The protein resides in the cell membrane. Functionally, probable glucose transporter. This is Putative transporter-like protein YIL171W from Saccharomyces cerevisiae (strain ATCC 204508 / S288c) (Baker's yeast).